A 309-amino-acid polypeptide reads, in one-letter code: Coenzyme PQQ synthesis protein B (309 aa).

It belongs to the PqqB family.

It participates in cofactor biosynthesis; pyrroloquinoline quinone biosynthesis. Functionally, may be involved in the transport of PQQ or its precursor to the periplasm. This is Coenzyme PQQ synthesis protein B from Nitrosococcus oceani (strain ATCC 19707 / BCRC 17464 / JCM 30415 / NCIMB 11848 / C-107).